We begin with the raw amino-acid sequence, 247 residues long: Vacuolar iron transporter 1 (247 aa).

Over methionine 1 to aspartate 33 the chain is Cytoplasmic. The chain crosses the membrane as a helical span at residues valine 34–glycine 54. Topologically, residues alanine 55–serine 60 are vacuolar. Residues leucine 61–glycine 81 form a helical membrane-spanning segment. The Cytoplasmic portion of the chain corresponds to tyrosine 82–threonine 167. Fe cation is bound by residues glutamate 99, glutamate 102, glutamate 110, glutamate 113, methionine 146, and glutamate 150. Residues isoleucine 168–phenylalanine 188 form a helical membrane-spanning segment. The Vacuolar portion of the chain corresponds to alanine 189–glutamine 191. A helical transmembrane segment spans residues alanine 192–glycine 212. The Cytoplasmic segment spans residues arginine 213–proline 219. A helical membrane pass occupies residues valine 220–methionine 240. Topologically, residues alanine 241 to valine 247 are vacuolar.

It belongs to the CCC1 family. Expressed at high levels in the blue epidermal cells of the inner bottom part of the petal (at protein level). No detectable expression in parenchyma and epidermis of the purple segments of the petal, parenchyma of the blue segments, leaf, stem, bulb and root (at protein level). High levels of mRNA in the blue epidermal cells of the inner bottom part of the petal. Low-levels of mRNA in the purple segments of the petal, stem, leaf, root, bulb and pistil.

The protein resides in the vacuole membrane. The catalysed reaction is Fe(2+)(in) = Fe(2+)(out). Its function is as follows. Vacuolar iron transporter involved in the transfer of iron ions from the cytosol to the vacuole for intracellular iron storage. Plays an essential role in the development of blue coloration in tulip petals most likely due to the accumulation of ferrous ions that can form complexes with anthocyanins. The polypeptide is Vacuolar iron transporter 1 (Tulipa gesneriana (Garden tulip)).